A 299-amino-acid chain; its full sequence is F-actin-capping protein subunit alpha-3 (299 aa).

Residues S2 and S290 each carry the phosphoserine modification.

This sequence belongs to the F-actin-capping protein alpha subunit family. Component of the F-actin capping complex, composed of a heterodimer of an alpha and a beta subunit. Component of the WASH complex, composed of F-actin-capping protein subunit alpha (CAPZA1, CAPZA2 or CAPZA3), F-actin-capping protein subunit beta (CAPZB), WASHC1, WASHC2, WASHC3, WASHC4 and WASHC5. Exclusively expressed in the testis.

The protein localises to the cytoplasm. The protein resides in the cytoskeleton. Functionally, F-actin-capping proteins bind in a Ca(2+)-independent manner to the fast growing ends of actin filaments (barbed end) thereby blocking the exchange of subunits at these ends. Unlike other capping proteins (such as gelsolin and severin), these proteins do not sever actin filaments. May play a role in the morphogenesis of spermatid. In Mus musculus (Mouse), this protein is F-actin-capping protein subunit alpha-3 (Capza3).